A 762-amino-acid chain; its full sequence is 5-methyltetrahydropteroyltriglutamate--homocysteine methyltransferase (762 aa).

5-methyltetrahydropteroyltri-L-glutamate-binding positions include 16–19 and K118; that span reads RELK. Residues 439–441 and E492 contribute to the L-homocysteine site; that span reads IGS. L-methionine-binding positions include 439–441 and E492; that span reads IGS. Residues 523–524 and W569 contribute to the 5-methyltetrahydropteroyltri-L-glutamate site; that span reads RC. D607 contributes to the L-homocysteine binding site. Position 607 (D607) interacts with L-methionine. Residue E613 participates in 5-methyltetrahydropteroyltri-L-glutamate binding. Zn(2+)-binding residues include H649, C651, and E673. H702 serves as the catalytic Proton donor. Residue C734 coordinates Zn(2+).

It belongs to the vitamin-B12 independent methionine synthase family. Requires Zn(2+) as cofactor.

It catalyses the reaction 5-methyltetrahydropteroyltri-L-glutamate + L-homocysteine = tetrahydropteroyltri-L-glutamate + L-methionine. It participates in amino-acid biosynthesis; L-methionine biosynthesis via de novo pathway; L-methionine from L-homocysteine (MetE route): step 1/1. Catalyzes the transfer of a methyl group from 5-methyltetrahydrofolate to homocysteine resulting in methionine formation. This is 5-methyltetrahydropteroyltriglutamate--homocysteine methyltransferase from Pseudomonas entomophila (strain L48).